Here is a 287-residue protein sequence, read N- to C-terminus: Flagellin (287 aa).

Belongs to the bacterial flagellin family.

The protein resides in the secreted. Its subcellular location is the bacterial flagellum. Its function is as follows. Flagellin is the subunit protein which polymerizes to form the filaments of bacterial flagella. This chain is Flagellin (flaA), found in Listeria innocua serovar 6a (strain ATCC BAA-680 / CLIP 11262).